The sequence spans 1006 residues: Unconventional myosin-Id (1006 aa).

The residue at position 2 (alanine 2) is an N-acetylalanine. In terms of domain architecture, Myosin motor spans phenylalanine 9–alanine 695. ATP is bound at residue glycine 102–threonine 109. Position 200 is a phosphoserine (serine 200). Tyrosine 536 carries the post-translational modification Phosphotyrosine. An actin-binding region spans residues methionine 572–aspartate 594. IQ domains lie at valine 699–lysine 719 and threonine 721–histidine 741. Positions glycine 812–glycine 1005 constitute a TH1 domain.

Belongs to the TRAFAC class myosin-kinesin ATPase superfamily. Myosin family. In terms of assembly, interacts (via the two IQ motifs) with calmodulin. Binds an additional calmodulin chain via a third, C-terminal region. Interacts with F-actin.

It is found in the cytoplasm. Its subcellular location is the perikaryon. It localises to the cell projection. The protein localises to the dendrite. The protein resides in the early endosome. It is found in the cell cortex. In terms of biological role, unconventional myosin that functions as actin-based motor protein with ATPase activity. Plays a role in endosomal protein trafficking, and especially in the transfer of cargo proteins from early to recycling endosomes. Required for normal planar cell polarity in ciliated tracheal cells, for normal rotational polarity of cilia, and for coordinated, unidirectional ciliary movement in the trachea. Required for normal, polarized cilia organization in brain ependymal epithelial cells. This Bos taurus (Bovine) protein is Unconventional myosin-Id (MYO1D).